Consider the following 437-residue polypeptide: MATPVSSNAELFERAQRSIPGGVNSPVRAFRAVGGTPRFIARAQGAYMWDAEGKQYIDYIGSWGPMILGHGHPAVLAAVQKAATEGFSFGAPTEREVELAETILALVPSCEQIRLVSSGTEAAMSAIRLARGATGRSKLIKFEGCYHGHADALLVKAGSGLATFGNPTSAGVPPEVVQHTLVLTYNDIEQLEEAFKIHGPELACVMIEPIAGNMNFVRATVPFMKRIRELCTQHGALLVFDEVMCGFRVALGSAQSLYAQAIPGFAPDVSVFGKVIGGGMPLAAFGASRKIMSLLAPLGPVYQAGTLSGNPVATACGLATLREISQPGFFEALGARTRRLVDGLSAAAADAGVPFVGDCQGGMFGFFFPRNRGEGLPQNYATVMATDQARFNSFFHGLLDRGVYLAPALYEAGFVSAAHSDADIDATVAAARAALQP.

The residue at position 274 (K274) is an N6-(pyridoxal phosphate)lysine.

It belongs to the class-III pyridoxal-phosphate-dependent aminotransferase family. HemL subfamily. In terms of assembly, homodimer. It depends on pyridoxal 5'-phosphate as a cofactor.

It localises to the cytoplasm. It catalyses the reaction (S)-4-amino-5-oxopentanoate = 5-aminolevulinate. It functions in the pathway porphyrin-containing compound metabolism; protoporphyrin-IX biosynthesis; 5-aminolevulinate from L-glutamyl-tRNA(Glu): step 2/2. This is Glutamate-1-semialdehyde 2,1-aminomutase from Leptothrix cholodnii (strain ATCC 51168 / LMG 8142 / SP-6) (Leptothrix discophora (strain SP-6)).